The sequence spans 244 residues: MATRLQYENSCDVGVFLKLTNKYCLVGQCGSKQFLHTVENRLADHIPVVETSIAGTRIVGRLSAGNKNGLLLPNTCTDQELQQIRNSLPDDVVVQRIEEKFSALGNCIATNDYVALVHPDIDRETEEIIADVLGVEVFRQTVSGNVLVGTYCALTNQGALVHPMTSIADQDELSSLLQVPLVAGTVNRGNECVAAGCVVNDWTAIVGADTTATEISVIESIFALQGSKPSNIINNIRNSIVDNV.

It belongs to the eIF-6 family. In terms of assembly, monomer. Associates with the 60S ribosomal subunit.

The protein resides in the cytoplasm. The protein localises to the nucleus. It is found in the nucleolus. Its function is as follows. Binds to the 60S ribosomal subunit and prevents its association with the 40S ribosomal subunit to form the 80S initiation complex in the cytoplasm. May also be involved in ribosome biogenesis. The sequence is that of Eukaryotic translation initiation factor 6 (eif6) from Dictyostelium discoideum (Social amoeba).